The chain runs to 575 residues: Arginine--tRNA ligase (575 aa).

The short motif at 131–141 (ANPNGPLHIGH) is the 'HIGH' region element.

This sequence belongs to the class-I aminoacyl-tRNA synthetase family.

The protein resides in the cytoplasm. It carries out the reaction tRNA(Arg) + L-arginine + ATP = L-arginyl-tRNA(Arg) + AMP + diphosphate. The protein is Arginine--tRNA ligase of Methanobrevibacter smithii (strain ATCC 35061 / DSM 861 / OCM 144 / PS).